The sequence spans 324 residues: NADH-ubiquinone oxidoreductase chain 1 (324 aa).

Helical transmembrane passes span 9 to 29 (LINP…LTLV), 75 to 95 (ILFL…WAPM), 106 to 126 (LGIL…LGSG), 146 to 166 (ISYE…SGGY), 178 to 198 (TWLL…TLAE), 212 to 232 (ELVS…FFLA), 259 to 279 (ELMT…FLWM), and 299 to 319 (FLPI…ALAG).

The protein belongs to the complex I subunit 1 family. As to quaternary structure, core subunit of respiratory chain NADH dehydrogenase (Complex I) which is composed of 45 different subunits.

The protein resides in the mitochondrion inner membrane. It catalyses the reaction a ubiquinone + NADH + 5 H(+)(in) = a ubiquinol + NAD(+) + 4 H(+)(out). In terms of biological role, core subunit of the mitochondrial membrane respiratory chain NADH dehydrogenase (Complex I) which catalyzes electron transfer from NADH through the respiratory chain, using ubiquinone as an electron acceptor. Essential for the catalytic activity and assembly of complex I. This Danio rerio (Zebrafish) protein is NADH-ubiquinone oxidoreductase chain 1 (mt-nd1).